The sequence spans 513 residues: ATP synthase subunit alpha (513 aa).

ATP is bound at residue 169 to 176; sequence GDRQTGKT.

It belongs to the ATPase alpha/beta chains family. F-type ATPases have 2 components, CF(1) - the catalytic core - and CF(0) - the membrane proton channel. CF(1) has five subunits: alpha(3), beta(3), gamma(1), delta(1), epsilon(1). CF(0) has three main subunits: a(1), b(2) and c(9-12). The alpha and beta chains form an alternating ring which encloses part of the gamma chain. CF(1) is attached to CF(0) by a central stalk formed by the gamma and epsilon chains, while a peripheral stalk is formed by the delta and b chains.

The protein resides in the cell inner membrane. The catalysed reaction is ATP + H2O + 4 H(+)(in) = ADP + phosphate + 5 H(+)(out). Its function is as follows. Produces ATP from ADP in the presence of a proton gradient across the membrane. The alpha chain is a regulatory subunit. The protein is ATP synthase subunit alpha of Proteus mirabilis (strain HI4320).